Here is a 429-residue protein sequence, read N- to C-terminus: 3-phosphoshikimate 1-carboxyvinyltransferase (429 aa).

3-phosphoshikimate contacts are provided by lysine 22, serine 23, and arginine 27. Position 22 (lysine 22) interacts with phosphoenolpyruvate. The phosphoenolpyruvate site is built by glycine 94 and arginine 122. Serine 167, glutamine 169, aspartate 315, and lysine 342 together coordinate 3-phosphoshikimate. Position 169 (glutamine 169) interacts with phosphoenolpyruvate. The Proton acceptor role is filled by aspartate 315. Residues arginine 346 and arginine 388 each contribute to the phosphoenolpyruvate site.

Belongs to the EPSP synthase family. As to quaternary structure, monomer.

It localises to the cytoplasm. It carries out the reaction 3-phosphoshikimate + phosphoenolpyruvate = 5-O-(1-carboxyvinyl)-3-phosphoshikimate + phosphate. It participates in metabolic intermediate biosynthesis; chorismate biosynthesis; chorismate from D-erythrose 4-phosphate and phosphoenolpyruvate: step 6/7. In terms of biological role, catalyzes the transfer of the enolpyruvyl moiety of phosphoenolpyruvate (PEP) to the 5-hydroxyl of shikimate-3-phosphate (S3P) to produce enolpyruvyl shikimate-3-phosphate and inorganic phosphate. The polypeptide is 3-phosphoshikimate 1-carboxyvinyltransferase (Citrifermentans bemidjiense (strain ATCC BAA-1014 / DSM 16622 / JCM 12645 / Bem) (Geobacter bemidjiensis)).